The chain runs to 49 residues: MRVKIALVCTECKNRNYHTTKNKKNDPDRLELKKYCKHCKKHTLHRETK.

The protein belongs to the bacterial ribosomal protein bL33 family.

The protein is Large ribosomal subunit protein bL33 of Caldanaerobacter subterraneus subsp. tengcongensis (strain DSM 15242 / JCM 11007 / NBRC 100824 / MB4) (Thermoanaerobacter tengcongensis).